The sequence spans 137 residues: Protein PsiE homolog (137 aa).

The next 4 helical transmembrane spans lie at 15-35, 55-75, 82-102, and 108-128; these read LRITLNLALIMVGFTLVAFLI, YYMTQDILTFFLYFEFIALIV, FHFPLRYFIYIGITAIIRFII, and ATSTLILSGAILLLVAALFLA.

Belongs to the PsiE family.

It is found in the cell membrane. The chain is Protein PsiE homolog from Listeria innocua serovar 6a (strain ATCC BAA-680 / CLIP 11262).